The primary structure comprises 874 residues: Alanine--tRNA ligase (874 aa).

Zn(2+) is bound by residues His564, His568, Cys665, and His669.

It belongs to the class-II aminoacyl-tRNA synthetase family. It depends on Zn(2+) as a cofactor.

It is found in the cytoplasm. It carries out the reaction tRNA(Ala) + L-alanine + ATP = L-alanyl-tRNA(Ala) + AMP + diphosphate. In terms of biological role, catalyzes the attachment of alanine to tRNA(Ala) in a two-step reaction: alanine is first activated by ATP to form Ala-AMP and then transferred to the acceptor end of tRNA(Ala). Also edits incorrectly charged Ser-tRNA(Ala) and Gly-tRNA(Ala) via its editing domain. The polypeptide is Alanine--tRNA ligase (Burkholderia vietnamiensis (strain G4 / LMG 22486) (Burkholderia cepacia (strain R1808))).